The following is a 41-amino-acid chain: Large ribosomal subunit protein bL36 (41 aa).

Belongs to the bacterial ribosomal protein bL36 family.

The polypeptide is Large ribosomal subunit protein bL36 (Granulibacter bethesdensis (strain ATCC BAA-1260 / CGDNIH1)).